Consider the following 255-residue polypeptide: Putative enoyl-CoA hydratase/isomerase YhaR (255 aa).

2 helical membrane passes run 96 to 116 (VTIA…ALCA) and 126 to 146 (VLAM…HYLL).

Belongs to the enoyl-CoA hydratase/isomerase family.

Its subcellular location is the cell membrane. The sequence is that of Putative enoyl-CoA hydratase/isomerase YhaR (yhaR) from Bacillus subtilis (strain 168).